Consider the following 328-residue polypeptide: Methionyl-tRNA formyltransferase (328 aa).

(6S)-5,6,7,8-tetrahydrofolate is bound at residue 121-124 (SLLP).

It belongs to the Fmt family.

It carries out the reaction L-methionyl-tRNA(fMet) + (6R)-10-formyltetrahydrofolate = N-formyl-L-methionyl-tRNA(fMet) + (6S)-5,6,7,8-tetrahydrofolate + H(+). Attaches a formyl group to the free amino group of methionyl-tRNA(fMet). The formyl group appears to play a dual role in the initiator identity of N-formylmethionyl-tRNA by promoting its recognition by IF2 and preventing the misappropriation of this tRNA by the elongation apparatus. In Burkholderia thailandensis (strain ATCC 700388 / DSM 13276 / CCUG 48851 / CIP 106301 / E264), this protein is Methionyl-tRNA formyltransferase.